Consider the following 179-residue polypeptide: ATP synthase subunit delta (179 aa).

This sequence belongs to the ATPase delta chain family. As to quaternary structure, F-type ATPases have 2 components, F(1) - the catalytic core - and F(0) - the membrane proton channel. F(1) has five subunits: alpha(3), beta(3), gamma(1), delta(1), epsilon(1). F(0) has three main subunits: a(1), b(2) and c(10-14). The alpha and beta chains form an alternating ring which encloses part of the gamma chain. F(1) is attached to F(0) by a central stalk formed by the gamma and epsilon chains, while a peripheral stalk is formed by the delta and b chains.

It localises to the cell membrane. Functionally, f(1)F(0) ATP synthase produces ATP from ADP in the presence of a proton or sodium gradient. F-type ATPases consist of two structural domains, F(1) containing the extramembraneous catalytic core and F(0) containing the membrane proton channel, linked together by a central stalk and a peripheral stalk. During catalysis, ATP synthesis in the catalytic domain of F(1) is coupled via a rotary mechanism of the central stalk subunits to proton translocation. In terms of biological role, this protein is part of the stalk that links CF(0) to CF(1). It either transmits conformational changes from CF(0) to CF(1) or is implicated in proton conduction. In Listeria monocytogenes serovar 1/2a (strain ATCC BAA-679 / EGD-e), this protein is ATP synthase subunit delta.